The sequence spans 710 residues: Chaperonin-containing T-complex member BBS12 (710 aa).

This sequence belongs to the TCP-1 chaperonin family. BBS12 subfamily. Component of the chaperonin-containing T-complex (TRiC), a heterooligomeric complex of about 850 to 900 kDa that forms two stacked rings, 12 to 16 nm in diameter. Interacts with MKKS.

It is found in the cell projection. The protein localises to the cilium. Its function is as follows. Component of the chaperonin-containing T-complex (TRiC), a molecular chaperone complex that assists the folding of proteins upon ATP hydrolysis. As part of the TRiC complex may play a role in the assembly of BBSome, a complex involved in ciliogenesis regulating transports vesicles to the cilia. Involved in adipogenic differentiation. The sequence is that of Chaperonin-containing T-complex member BBS12 (BBS12) from Homo sapiens (Human).